A 183-amino-acid polypeptide reads, in one-letter code: Inner membrane protein p54 (183 aa).

The helical transmembrane segment at 32-52 (YTILIAIVVLVIIIIVLIYLF) threads the bilayer. Residues 81 to 157 (EVTPQPGTSK…PYTTVTTQNT (77 aa)) form a disordered region. Positions 111–122 (RPATNKPVTDNP) are enriched in polar residues. Low complexity predominate over residues 130 to 143 (ATGGPAAAPAAASA). The tract at residues 149 to 161 (YTTVTTQNTASQT) is interaction with host DYNLL1.

It belongs to the asfivirus envelope protein p54 family. As to quaternary structure, interacts with the host light chain cytoplasmic dynein DYNLL1; this interaction is critical for intracellular microtubule-dependent virus transport toward viral factories.

The protein resides in the virion membrane. The protein localises to the host cytoplasm. Its subcellular location is the host cytoskeleton. It localises to the host endoplasmic reticulum membrane. Inner envelope protein involved, through its interaction with host dynein, in the intracellular microtubule-dependent transport of viral capsid toward viral factories. Seems to induce caspase-3 activation and apoptosis. Plays a role in virion morphogenesis by recruiting and transforming the host ER membranes into the precursors of the viral envelope. Involved in virus attachment to the host cell. The sequence is that of Inner membrane protein p54 from African swine fever virus (strain Badajoz 1971 Vero-adapted) (Ba71V).